The following is a 509-amino-acid chain: Histidine--tRNA ligase (509 aa).

This sequence belongs to the class-II aminoacyl-tRNA synthetase family. Homodimer.

Its subcellular location is the cytoplasm. It catalyses the reaction tRNA(His) + L-histidine + ATP = L-histidyl-tRNA(His) + AMP + diphosphate + H(+). In Rhodopseudomonas palustris (strain TIE-1), this protein is Histidine--tRNA ligase.